The following is a 267-amino-acid chain: Cilia- and flagella-associated protein 300 (267 aa).

Belongs to the CFAP300 family. In terms of assembly, interacts with DNAAF2.

The protein resides in the cytoplasm. Its subcellular location is the cytoskeleton. It localises to the cilium axoneme. Its function is as follows. Cilium- and flagellum-specific protein that plays a role in axonemal structure organization and motility. May play a role in outer and inner dynein arm assembly. The sequence is that of Cilia- and flagella-associated protein 300 from Rattus norvegicus (Rat).